A 407-amino-acid polypeptide reads, in one-letter code: MKYDHLLVRYGELTLKGSNRKKFVNQLRNNVNKSLKGLDGFVVKGKRDRMYIELEDHADINEITYRLSKIFGIKSISPVLKVEKTLEAMSAAAIKFAQQFEENSTFKIDVKRADKNFPMDTYELQRELGGAVLKHFDNISVNVKRPDHEIRVEVRLDAIYMYEEVVAGAGGLPVGTGGKTLLMLSGGIDSPVAGMEVMRRGVTIEAIHFHSPPFTSDQAKEKVIELTRILAERVGPIKLHIVPFTELQKQVNKVVHPRYTMTSTRRMMMRVADKLVHQIGALAIVNGENLGQVASQTLHSMYAINNVTSTPVLRPLLTYDKEEIIIKSKEIGTFETSIQPFEDCCTIFTPKNPVTEPNFDKVVQYESVFDFEEMINRAVENIETLEITSDYKTIKEQQTNQLINDFL.

The THUMP domain maps to 61–165; it reads NEITYRLSKI…LDAIYMYEEV (105 aa). ATP is bound by residues 183–184, 208–209, Arg265, Gly287, and Gln296; these read ML and HF.

The protein belongs to the ThiI family.

Its subcellular location is the cytoplasm. It carries out the reaction [ThiI sulfur-carrier protein]-S-sulfanyl-L-cysteine + a uridine in tRNA + 2 reduced [2Fe-2S]-[ferredoxin] + ATP + H(+) = [ThiI sulfur-carrier protein]-L-cysteine + a 4-thiouridine in tRNA + 2 oxidized [2Fe-2S]-[ferredoxin] + AMP + diphosphate. The enzyme catalyses [ThiS sulfur-carrier protein]-C-terminal Gly-Gly-AMP + S-sulfanyl-L-cysteinyl-[cysteine desulfurase] + AH2 = [ThiS sulfur-carrier protein]-C-terminal-Gly-aminoethanethioate + L-cysteinyl-[cysteine desulfurase] + A + AMP + 2 H(+). Its pathway is cofactor biosynthesis; thiamine diphosphate biosynthesis. Functionally, catalyzes the ATP-dependent transfer of a sulfur to tRNA to produce 4-thiouridine in position 8 of tRNAs, which functions as a near-UV photosensor. Also catalyzes the transfer of sulfur to the sulfur carrier protein ThiS, forming ThiS-thiocarboxylate. This is a step in the synthesis of thiazole, in the thiamine biosynthesis pathway. The sulfur is donated as persulfide by IscS. The protein is Probable tRNA sulfurtransferase of Staphylococcus aureus (strain bovine RF122 / ET3-1).